The primary structure comprises 333 residues: Ornithine carbamoyltransferase (333 aa).

Carbamoyl phosphate-binding positions include 56–59 (STRT), Gln-83, Arg-107, and 134–137 (HPTQ). L-ornithine-binding positions include Asn-167, Asp-231, and 235–236 (SM). Residues 273–274 (CL) and Arg-318 contribute to the carbamoyl phosphate site.

The protein belongs to the aspartate/ornithine carbamoyltransferase superfamily. OTCase family.

Its subcellular location is the cytoplasm. The catalysed reaction is carbamoyl phosphate + L-ornithine = L-citrulline + phosphate + H(+). Its pathway is amino-acid biosynthesis; L-arginine biosynthesis; L-arginine from L-ornithine and carbamoyl phosphate: step 1/3. Reversibly catalyzes the transfer of the carbamoyl group from carbamoyl phosphate (CP) to the N(epsilon) atom of ornithine (ORN) to produce L-citrulline. This is Ornithine carbamoyltransferase from Staphylococcus aureus (strain MSSA476).